The following is a 65-amino-acid chain: MPKMKSNRGAAKRFKRTGSGKFKHRQAFLNHILTKKTTKRKRHLRHTLVTSGSDQAALRRMLPYG.

The disordered stretch occupies residues 1-23 (MPKMKSNRGAAKRFKRTGSGKFK). Positions 10–23 (AAKRFKRTGSGKFK) are enriched in basic residues.

The protein belongs to the bacterial ribosomal protein bL35 family.

The polypeptide is Large ribosomal subunit protein bL35 (Acidithiobacillus ferrooxidans (strain ATCC 53993 / BNL-5-31) (Leptospirillum ferrooxidans (ATCC 53993))).